A 596-amino-acid polypeptide reads, in one-letter code: Actin-histidine N-methyltransferase (596 aa).

Residues 1–22 (MGKKSRVKTQKSGTGATATVSP) are disordered. Over residues 10–20 (QKSGTGATATV) the composition is skewed to polar residues. S-adenosyl-L-methionine contacts are provided by residues Arg-75, 104–106 (EGF), Arg-254, 275–279 (DMCNH), and 325–327 (SGF). The region spanning 94–314 (EGFEMVNFKE…AGDQIYIFYG (221 aa)) is the SET domain. The disordered stretch occupies residues 551 to 596 (GLVNGESLIPNGTRSENESLSPEESENTTGDTEESSGSMDAVKERL). Acidic residues predominate over residues 571-584 (SPEESENTTGDTEE).

This sequence belongs to the class V-like SAM-binding methyltransferase superfamily. SETD3 actin-histidine methyltransferase family. As to quaternary structure, interacts with MYOD1. Post-translationally, phosphorylated by GSK3B, which is required for recognition by the SCF(FBXW7) complex and subsequent degradation. Ubiquitinated by the SCF(FBXW7) complex following phosphorylation by GSK3B, leading to its degradation by the proteasome.

Its subcellular location is the cytoplasm. The protein resides in the nucleus. It carries out the reaction L-histidyl-[protein] + S-adenosyl-L-methionine = N(tele)-methyl-L-histidyl-[protein] + S-adenosyl-L-homocysteine + H(+). In terms of biological role, protein-histidine N-methyltransferase that specifically mediates 3-methylhistidine (tele-methylhistidine) methylation of actin at 'His-73'. Histidine methylation of actin is required for smooth muscle contraction of the laboring uterus during delivery. Does not have protein-lysine N-methyltransferase activity and probably only catalyzes histidine methylation of actin. The polypeptide is Actin-histidine N-methyltransferase (Rattus norvegicus (Rat)).